Here is a 492-residue protein sequence, read N- to C-terminus: GTPase Der (492 aa).

Positions 3–166 (PVIALVGRPN…AVLGIFPKDA (164 aa)) constitute an EngA-type G 1 domain. Residues 9 to 16 (GRPNVGKS), 56 to 60 (DTGGI), and 118 to 121 (NKVD) each bind GTP. Residues 166–190 (AGEPEEGAEAEEEVQEGQEAKRIPG) form a disordered region. Over residues 168–181 (EPEEGAEAEEEVQE) the composition is skewed to acidic residues. The EngA-type G 2 domain occupies 197-370 (IKLAIIGRPN…SVQAAFHSAV (174 aa)). GTP-binding positions include 203–210 (GRPNVGKS), 250–254 (DTAGV), and 315–318 (NKWD). The region spanning 371–455 (TRWPTSRLTQ…PIRIEYKGGE (85 aa)) is the KH-like domain. A disordered region spans residues 453–492 (GGENPYEGNKNKLTDRQVNKKRRLMSHHKKAEKKRKDKRK). The segment covering 461-470 (NKNKLTDRQV) has biased composition (basic and acidic residues). Positions 471-492 (NKKRRLMSHHKKAEKKRKDKRK) are enriched in basic residues.

This sequence belongs to the TRAFAC class TrmE-Era-EngA-EngB-Septin-like GTPase superfamily. EngA (Der) GTPase family. As to quaternary structure, associates with the 50S ribosomal subunit.

Its function is as follows. GTPase that plays an essential role in the late steps of ribosome biogenesis. The sequence is that of GTPase Der from Ectopseudomonas mendocina (strain ymp) (Pseudomonas mendocina).